A 349-amino-acid polypeptide reads, in one-letter code: 1-acylglycerol-3-phosphate O-acyltransferase ABHD5 (349 aa).

Ala-2 is subject to N-acetylalanine. Positions 77–185 (PLVLLHGFGG…VEPWGFPERP (109 aa)) constitute an AB hydrolase-1 domain. The short motif at 327–332 (HYVYAD) is the HXXXXD motif element.

The protein belongs to the peptidase S33 family. ABHD4/ABHD5 subfamily. In terms of assembly, interacts with ADRP, PLIN and PNPLA2. Interacts with PLIN5; promotes interaction with PNPLA2.

It is found in the cytoplasm. Its subcellular location is the lipid droplet. The catalysed reaction is a 1-acyl-sn-glycero-3-phosphate + an acyl-CoA = a 1,2-diacyl-sn-glycero-3-phosphate + CoA. It carries out the reaction 1-(9Z-octadecenoyl)-sn-glycero-3-phosphate + (9Z)-octadecenoyl-CoA = 1,2-di-(9Z-octadecenoyl)-sn-glycero-3-phosphate + CoA. The enzyme catalyses 1-(9Z-octadecenoyl)-sn-glycero-3-phosphate + hexadecanoyl-CoA = 1-(9Z)-octadecenoyl-2-hexadecanoyl-sn-glycero-3-phosphate + CoA. It catalyses the reaction 1-(9Z-octadecenoyl)-sn-glycero-3-phosphate + octadecanoyl-CoA = 1-(9Z-octadecenoyl)-2-octadecanoyl-sn-glycero-3-phosphate + CoA. The catalysed reaction is 1-(9Z-octadecenoyl)-sn-glycero-3-phosphate + (5Z,8Z,11Z,14Z)-eicosatetraenoyl-CoA = 1-(9Z)-octadecenoyl-2-(5Z,8Z,11Z,14Z)-eicosatetraenoyl-sn-glycero-3-phosphate + CoA. It carries out the reaction eicosanoyl-CoA + 1-(9Z-octadecenoyl)-sn-glycero-3-phosphate = 1-(9Z)-octadecenoyl-2-eicosanoyl-sn-glycero-3-phosphate + CoA. The enzyme catalyses 1-hexadecanoyl-sn-glycero-3-phosphate + (9Z)-octadecenoyl-CoA = 1-hexadecanoyl-2-(9Z-octadecenoyl)-sn-glycero-3-phosphate + CoA. It catalyses the reaction 1-octadecanoyl-sn-glycero-3-phosphate + (9Z)-octadecenoyl-CoA = 1-octadecanoyl-2-(9Z-octadecenoyl)-sn-glycero-3-phosphate + CoA. The catalysed reaction is 1-(5Z,8Z,11Z,14Z-eicosatetraenoyl)-sn-glycero-3-phosphate + (9Z)-octadecenoyl-CoA = 1-(5Z,8Z,11Z,14Z)-eicosatetraenoyl-2-(9Z)-octadecenoyl-sn-glycero-3-phosphate + CoA. With respect to regulation, acyltransferase activity is inhibited by detergents such as Triton X-100 and 3-[(3-cholamidopropyl)dimethylammonio]-1-propanesulfonate (CHAPS). Acyltransferase activity is inhibited by the presence of magnesium and calcium. Its function is as follows. Coenzyme A-dependent lysophosphatidic acid acyltransferase that catalyzes the transfer of an acyl group on a lysophosphatidic acid. Functions preferentially with 1-oleoyl-lysophosphatidic acid followed by 1-palmitoyl-lysophosphatidic acid, 1-stearoyl-lysophosphatidic acid and 1-arachidonoyl-lysophosphatidic acid as lipid acceptor. Functions preferentially with arachidonoyl-CoA followed by oleoyl-CoA as acyl group donors. Functions in phosphatidic acid biosynthesis. May regulate the cellular storage of triacylglycerol through activation of the phospholipase PNPLA2. Involved in keratinocyte differentiation. Regulates lipid droplet fusion. This Sus scrofa (Pig) protein is 1-acylglycerol-3-phosphate O-acyltransferase ABHD5.